A 255-amino-acid polypeptide reads, in one-letter code: Myb-related protein Zm38 (255 aa).

HTH myb-type domains are found at residues 9-61 (KAHT…INYL) and 62-116 (RPDL…RRKL). 2 DNA-binding regions (H-T-H motif) span residues 37–61 (WRSL…INYL) and 89–112 (WSLI…NTHV).

It localises to the nucleus. In terms of biological role, transcription factor that negatively regulates genes involved in anthocyanin biosynthesis. The protein is Myb-related protein Zm38 of Zea mays (Maize).